A 324-amino-acid polypeptide reads, in one-letter code: uncharacterized protein (324 aa).

A run of 9 helical transmembrane segments spans residues 34-54 (MAVL…FYVL), 76-96 (VFMA…NVGL), 103-123 (IYQM…TTLL), 127-147 (IGQL…IVGY), 158-178 (PILG…QFTI), 198-218 (GTYG…FIGS), 243-263 (YVIS…GLAI), 275-295 (LDIA…MESF), and 297-317 (LLQF…HSII).

Its subcellular location is the membrane. This is an uncharacterized protein from Schizosaccharomyces pombe (strain 972 / ATCC 24843) (Fission yeast).